Consider the following 59-residue polypeptide: Protein translocase subunit SecE (59 aa).

The helical transmembrane segment at 37–57 (GIGIIIIGVIGFIISIIAQLL) threads the bilayer.

The protein belongs to the SecE/SEC61-gamma family. Component of the Sec protein translocase complex. Heterotrimer consisting of SecY (alpha), SecG (beta) and SecE (gamma) subunits. The heterotrimers can form oligomers, although 1 heterotrimer is thought to be able to translocate proteins. Interacts with the ribosome. May interact with SecDF, and other proteins may be involved.

The protein localises to the cell membrane. Essential subunit of the Sec protein translocation channel SecYEG. Clamps together the 2 halves of SecY. May contact the channel plug during translocation. This chain is Protein translocase subunit SecE, found in Methanothermobacter thermautotrophicus (strain ATCC 29096 / DSM 1053 / JCM 10044 / NBRC 100330 / Delta H) (Methanobacterium thermoautotrophicum).